The following is a 274-amino-acid chain: Ciliary microtubule inner protein 2B (274 aa).

2 disordered regions span residues 46 to 89 (SPGL…SSMV) and 119 to 171 (TQRN…MDDR). Residues 130–155 (LPKEAKGEKDVEKDQEPKPEVEKEPE) are compositionally biased toward basic and acidic residues.

Belongs to the CIMIP2 family. As to quaternary structure, microtubule inner protein component of sperm flagellar doublet microtubules. Expressed in trachea multiciliated cells.

The protein resides in the cytoplasm. The protein localises to the cytoskeleton. Its subcellular location is the cilium axoneme. It is found in the flagellum axoneme. Microtubule inner protein (MIP) part of the dynein-decorated doublet microtubules (DMTs) in cilia axoneme, which is required for motile cilia beating. In Bos taurus (Bovine), this protein is Ciliary microtubule inner protein 2B (CIMIP2B).